A 316-amino-acid polypeptide reads, in one-letter code: Pantothenate kinase (316 aa).

Residue 95 to 102 (GSVAVGKS) coordinates ATP.

This sequence belongs to the prokaryotic pantothenate kinase family.

It is found in the cytoplasm. It carries out the reaction (R)-pantothenate + ATP = (R)-4'-phosphopantothenate + ADP + H(+). The protein operates within cofactor biosynthesis; coenzyme A biosynthesis; CoA from (R)-pantothenate: step 1/5. This Shewanella piezotolerans (strain WP3 / JCM 13877) protein is Pantothenate kinase.